The sequence spans 156 residues: ATP synthase subunit b (156 aa).

A helical transmembrane segment spans residues 5-27 (ITLIGQMITFAIFVGFTMKFVWP).

Belongs to the ATPase B chain family. F-type ATPases have 2 components, F(1) - the catalytic core - and F(0) - the membrane proton channel. F(1) has five subunits: alpha(3), beta(3), gamma(1), delta(1), epsilon(1). F(0) has three main subunits: a(1), b(2) and c(10-14). The alpha and beta chains form an alternating ring which encloses part of the gamma chain. F(1) is attached to F(0) by a central stalk formed by the gamma and epsilon chains, while a peripheral stalk is formed by the delta and b chains.

The protein resides in the cell inner membrane. F(1)F(0) ATP synthase produces ATP from ADP in the presence of a proton or sodium gradient. F-type ATPases consist of two structural domains, F(1) containing the extramembraneous catalytic core and F(0) containing the membrane proton channel, linked together by a central stalk and a peripheral stalk. During catalysis, ATP synthesis in the catalytic domain of F(1) is coupled via a rotary mechanism of the central stalk subunits to proton translocation. Its function is as follows. Component of the F(0) channel, it forms part of the peripheral stalk, linking F(1) to F(0). In Francisella philomiragia subsp. philomiragia (strain ATCC 25017 / CCUG 19701 / FSC 153 / O#319-036), this protein is ATP synthase subunit b.